A 117-amino-acid chain; its full sequence is Large ribosomal subunit protein bL20 (117 aa).

This sequence belongs to the bacterial ribosomal protein bL20 family.

Its function is as follows. Binds directly to 23S ribosomal RNA and is necessary for the in vitro assembly process of the 50S ribosomal subunit. It is not involved in the protein synthesizing functions of that subunit. This is Large ribosomal subunit protein bL20 from Vibrio cholerae serotype O1 (strain ATCC 39541 / Classical Ogawa 395 / O395).